The chain runs to 666 residues: MPPGGSGPGGCPRRPPALAGPLPPPPPPPPPPLLPLLPLLLLLLLGAAEGARVSSSLSTTHHVHHFHSKHGTVPIAINRMPFLTRGGHAGTTYIFGKGGALITYTWPPNDRPSTRMDRLAVGFSTHQRSAVLVRVDSASGLGDYLQLHIDQGTVGVIFNVGTDDITIDEPNAIVSDGKYHVVRFTRSGGNATLQVDSWPVNERYPAGNFDNERLAIARQRIPYRLGRVVDEWLLDKGRQLTIFNSQAAIKIGGRDQGRPFQGQVSGLYYNGLKVLALAAESDPNVRTEGHLRLVGEGPSVLLSAETTATTLLADMATTIMETTTTMATTTTRRGRSPTLRDSTTQNTDDLLVASAECPSDDEDLEECEPSTGGELILPIITEDSLDPPPVATRSPFVPPPPTFYPFLTGVGATQDTLPPPAARRPPSGGPCQAERDDSDCEEPIEASGFASGEVFDSSLPPTDDEDFYTTFPLVTDRTTLLSPRKPAPRPNLRTDGATGAPGVLFAPSAPAPNLPAGKMNHRDPLQPLLENPPLGPGAPTSFEPRRPPPLRPGVTSAPGFPHLPTANPTGPGERGPPGAVEVIRESSSTTGMVVGIVAAAALCILILLYAMYKYRNRDEGSYQVDQSRNYISNSAQSNGAVVKEKAPAAPKTPSKAKKNKDKEYYV.

The span at 1 to 10 (MPPGGSGPGG) shows a compositional bias: gly residues. Residues 1 to 30 (MPPGGSGPGGCPRRPPALAGPLPPPPPPPP) form a disordered region. The N-terminal stretch at 1 to 50 (MPPGGSGPGGCPRRPPALAGPLPPPPPPPPPPLLPLLPLLLLLLLGAAEG) is a signal peptide. The segment covering 21-30 (PLPPPPPPPP) has biased composition (pro residues). The Extracellular segment spans residues 51–590 (ARVSSSLSTT…EVIRESSSTT (540 aa)). Positions 91-299 (TTYIFGKGGA…HLRLVGEGPS (209 aa)) constitute a Laminin G-like domain. Ca(2+) is bound by residues Asp-143 and Val-160. Residue Asn-190 is glycosylated (N-linked (GlcNAc...) asparagine). Ca(2+)-binding residues include Ile-242 and Asn-244. The interval 327–346 (ATTTTRRGRSPTLRDSTTQN) is disordered. Ser-354 is a glycosylation site (O-linked (Xyl...) (heparan sulfate) serine). Disordered stretches follow at residues 412–443 (ATQD…CEEP) and 479–580 (TLLS…PGAV). The chain crosses the membrane as a helical span at residues 591–611 (GMVVGIVAAAALCILILLYAM). The Cytoplasmic portion of the chain corresponds to 612 to 666 (YKYRNRDEGSYQVDQSRNYISNSAQSNGAVVKEKAPAAPKTPSKAKKNKDKEYYV). A disordered region spans residues 633–666 (NSAQSNGAVVKEKAPAAPKTPSKAKKNKDKEYYV).

The protein belongs to the neurexin family. Interacts (via cytoplasmic C-terminal region) with CASK. Specific isoforms bind alpha-dystroglycan and neuroligins NLGN1, NLGN2 and NLGN3. Interacts with CBLN1, CBLN2 and, less avidly, with CBLN4. Interacts with CLSTN3. Post-translationally, O-glycosylated; contains heparan sulfate. Heparan sulfate attachment is required for synapse development by mediating interactions with neuroligins.

It localises to the presynaptic cell membrane. In terms of biological role, neuronal cell surface protein that may be involved in cell recognition and cell adhesion. In Homo sapiens (Human), this protein is Neurexin-2-beta (NRXN2).